Reading from the N-terminus, the 235-residue chain is Aspartate/glutamate leucyltransferase (235 aa).

The protein belongs to the R-transferase family. Bpt subfamily.

It is found in the cytoplasm. The catalysed reaction is N-terminal L-glutamyl-[protein] + L-leucyl-tRNA(Leu) = N-terminal L-leucyl-L-glutamyl-[protein] + tRNA(Leu) + H(+). It catalyses the reaction N-terminal L-aspartyl-[protein] + L-leucyl-tRNA(Leu) = N-terminal L-leucyl-L-aspartyl-[protein] + tRNA(Leu) + H(+). Functions in the N-end rule pathway of protein degradation where it conjugates Leu from its aminoacyl-tRNA to the N-termini of proteins containing an N-terminal aspartate or glutamate. This is Aspartate/glutamate leucyltransferase from Pseudomonas syringae pv. syringae (strain B728a).